We begin with the raw amino-acid sequence, 115 residues long: Allergen Tha p 2 (115 aa).

A signal peptide spans 1-15 (MKLLIFAILIALSSS).

The protein is Allergen Tha p 2 of Thaumetopoea pityocampa (Pine processionary moth).